A 188-amino-acid chain; its full sequence is Elongation factor P (188 aa).

Belongs to the elongation factor P family.

Its subcellular location is the cytoplasm. The protein operates within protein biosynthesis; polypeptide chain elongation. Functionally, involved in peptide bond synthesis. Stimulates efficient translation and peptide-bond synthesis on native or reconstituted 70S ribosomes in vitro. Probably functions indirectly by altering the affinity of the ribosome for aminoacyl-tRNA, thus increasing their reactivity as acceptors for peptidyl transferase. The chain is Elongation factor P from Nitrobacter hamburgensis (strain DSM 10229 / NCIMB 13809 / X14).